We begin with the raw amino-acid sequence, 868 residues long: Metabotropic glutamate receptor 6 (868 aa).

Residues 1-20 form the signal peptide; that stretch reads MARLLLALLAWLAQMSPVRA. The Extracellular portion of the chain corresponds to 21–576; sequence AGSVRLAGGL…VVRLTWSSPW (556 aa). A disulfide bond links cysteine 48 and cysteine 90. Residues serine 145, 166–168, and tyrosine 216 contribute to the L-glutamate site; that span reads AST. 7 disulfide bridges follow: cysteine 235–cysteine 527, cysteine 358–cysteine 374, cysteine 414–cysteine 421, cysteine 509–cysteine 528, cysteine 513–cysteine 531, cysteine 534–cysteine 546, and cysteine 549–cysteine 562. N-linked (GlcNAc...) asparagine glycosylation is present at asparagine 287. Aspartate 298 serves as a coordination point for L-glutamate. Lysine 391 is a binding site for L-glutamate. Residues asparagine 442 and asparagine 470 are each glycosylated (N-linked (GlcNAc...) asparagine). Residue asparagine 558 is glycosylated (N-linked (GlcNAc...) asparagine). A helical membrane pass occupies residues 577–599; sequence AAPPLLLAVLGIMATTTVVGTFV. Over 600 to 613 the chain is Cytoplasmic; that stretch reads RHNNTPIVRASGRE. The chain crosses the membrane as a helical span at residues 614-634; the sequence is LSYVLLTGIFLIYAVTFLMVA. The Extracellular segment spans residues 635–645; sequence EPGAAVCATRR. The chain crosses the membrane as a helical span at residues 646-664; it reads LFLGLGTTLSYSALLTKTN. The Cytoplasmic portion of the chain corresponds to 665–688; the sequence is RIYRIFEQGKRSVTPPPFISPTSQ. The chain crosses the membrane as a helical span at residues 689–709; the sequence is LVITFSLTSLQVVGVIAWLGA. Residues 710 to 739 are Extracellular-facing; sequence QPPHSVIDYEEQRTVDPEQARGVLKCDMSD. A helical transmembrane segment spans residues 740–761; the sequence is LSLIGCLGYSLLLMVTCTVYAI. Over 762 to 774 the chain is Cytoplasmic; that stretch reads KARGVPETFNEAK. A helical transmembrane segment spans residues 775–797; that stretch reads PIGFTMYTTCIVWLAFVPIFFGT. Residues 798–810 lie on the Extracellular side of the membrane; it reads AQSAEKIYIQTTT. The helical transmembrane segment at 811–836 threads the bilayer; that stretch reads LTVSLSLSASVSLGMLYVPKTYVILF. Residues 837-868 lie on the Cytoplasmic side of the membrane; that stretch reads HPEQNVQKRKRSLKTTSTVAAPPKGADTEDPK. Positions 845-868 are disordered; it reads RKRSLKTTSTVAAPPKGADTEDPK.

This sequence belongs to the G-protein coupled receptor 3 family. Homodimer. Interacts with GPR179. Interacts with photoreceptor synaptic protein LRIT1 (via its N-terminal extracellular domain).

Its subcellular location is the cell membrane. The protein resides in the endoplasmic reticulum membrane. The protein localises to the golgi apparatus membrane. It localises to the cell projection. It is found in the dendrite. G-protein coupled receptor for glutamate. Ligand binding causes a conformation change that triggers signaling via guanine nucleotide-binding proteins (G proteins) and modulates the activity of down-stream effectors, such as adenylate cyclase. Signaling inhibits adenylate cyclase activity. Signaling stimulates TRPM1 channel activity and Ca(2+) uptake. Required for normal vision. This Oryctolagus cuniculus (Rabbit) protein is Metabotropic glutamate receptor 6 (GRM6).